Consider the following 886-residue polypeptide: Alanine--tRNA ligase (886 aa).

Residues His-564, His-568, Cys-666, and His-670 each coordinate Zn(2+).

The protein belongs to the class-II aminoacyl-tRNA synthetase family. The cofactor is Zn(2+).

Its subcellular location is the cytoplasm. It catalyses the reaction tRNA(Ala) + L-alanine + ATP = L-alanyl-tRNA(Ala) + AMP + diphosphate. Its function is as follows. Catalyzes the attachment of alanine to tRNA(Ala) in a two-step reaction: alanine is first activated by ATP to form Ala-AMP and then transferred to the acceptor end of tRNA(Ala). Also edits incorrectly charged Ser-tRNA(Ala) and Gly-tRNA(Ala) via its editing domain. The protein is Alanine--tRNA ligase of Prochlorococcus marinus (strain MIT 9301).